We begin with the raw amino-acid sequence, 160 residues long: Salivary gland broad-spectrum antiviral protein (160 aa).

The helical transmembrane segment at 17–37 threads the bilayer; it reads VALGLYFTVVVFVLFITSVNL. Residues N62 and N145 are each glycosylated (N-linked (GlcNAc...) asparagine).

In terms of tissue distribution, salivary gland (at protein level).

The protein localises to the membrane. (Microbial infection) Modulates replication of Zika virus in salivary glands. Its function is as follows. (Microbial infection) Modulates replication of dengue virus type 2 in salivary glands. Functionally, (Microbial infection) Modulates replication of chikungunya virus in salivary glands. In Aedes aegypti (Yellowfever mosquito), this protein is Salivary gland broad-spectrum antiviral protein.